The sequence spans 376 residues: Immunoglobulin G-binding protein H (376 aa).

A signal peptide spans 1–41; it reads MTRQQTKKNYSLRKLKTGTASVAVALTVLGAGFANQTTVKA. The disordered stretch occupies residues 69 to 271; the sequence is TSLENEKLKS…AAKKELEANH (203 aa). 4 stretches are compositionally biased toward basic and acidic residues: residues 72 to 146, 156 to 203, 211 to 245, and 253 to 271; these read ENEK…KRYQ, ETEK…DKQI, LSRDLEASRAAKKELEANHQKLEAEHQKLKEDKQI, and LSRDLEASRAAKKELEANH. 3 C repeats span residues 153-187, 195-229, and 237-271; these read QQLETEKQISEASRKSLSRDLEASRAAKKDLEAEH and QKLKEDKQISDASRQGLSRDLEASRAAKKELEANH. D repeat units lie at residues 272-277, 278-283, 286-291, and 293-298; these read QKLEAE, AKALKE, AKQAEE, and AKLRAG. Positions 292–348 are disordered; it reads LAKLRAGKASDSQTPDTKPGNKAVPGKGQAPQAGTKPNQNKAPMKETKRQLPSTGET. Residues 342–346 carry the LPXTG sorting signal motif; sequence LPSTG. Position 345 is a pentaglycyl murein peptidoglycan amidated threonine (threonine 345). Positions 346–376 are cleaved as a propeptide — removed by sortase; the sequence is GETANPFFTAAALTVMATAGVAAVVKRKEEN.

Belongs to the M protein family.

The protein localises to the secreted. Its subcellular location is the cell wall. This is Immunoglobulin G-binding protein H from Streptococcus pyogenes serotype M1.